We begin with the raw amino-acid sequence, 160 residues long: Thy-1 membrane glycoprotein (160 aa).

The signal sequence occupies residues 1-19; that stretch reads MNPTVSIAVILTVLQAAHC. Pyrrolidone carboxylic acid is present on Gln-20. The Ig-like V-type domain maps to 20–120; that stretch reads QMIRDLSACL…YTGNQIKNIT (101 aa). 2 cysteine pairs are disulfide-bonded: Cys-28/Cys-129 and Cys-38/Cys-103. Residues Asn-42, Asn-78, and Asn-118 are each glycosylated (N-linked (GlcNAc...) asparagine). Residue Cys-129 is the site of GPI-anchor amidated cysteine attachment. Positions 130-160 are cleaved as a propeptide — removed in mature form; sequence VRLSLLIQNTSWLLLLLLSLPLLQAVDFVSL. A glycan (N-linked (GlcNAc...) asparagine) is linked at Asn-138.

In terms of processing, the N-terminus is blocked. Forebrain, cerebellum and tectum.

The protein resides in the cell membrane. In terms of biological role, may play a role in cell-cell or cell-ligand interactions during synaptogenesis and other events in the brain. This chain is Thy-1 membrane glycoprotein (THY1), found in Gallus gallus (Chicken).